The following is a 621-amino-acid chain: Very-long-chain aldehyde decarbonylase GL1-5 (621 aa).

Helical transmembrane passes span 99 to 119, 126 to 146, 186 to 206, 224 to 244, and 332 to 352; these read IILSGILLYLGALYVPGGQHL, GAGLIALLHAGPVEFLYYWFH, LLFSIPLIACALTGTASIIAF, FELVPSWLFTWFPPLKYLMYT, and MWPLSWLSMVLTWTYGSSFTV. The 135-residue stretch at 138–272 folds into the Fatty acid hydroxylase domain; it reads VEFLYYWFHR…MPFYDYIYNT (135 aa).

The protein belongs to the sterol desaturase family. Homodimer.

The protein resides in the endoplasmic reticulum membrane. The enzyme catalyses a long-chain fatty aldehyde + 2 NADPH + O2 + H(+) = a long-chain alkane + formate + 2 NADP(+) + H2O. Functionally, aldehyde decarbonylase involved in the conversion of aldehydes to alkanes. Core component of a very-long-chain alkane synthesis complex. In Oryza sativa subsp. indica (Rice), this protein is Very-long-chain aldehyde decarbonylase GL1-5.